Consider the following 105-residue polypeptide: ATP synthase subunit c (105 aa).

2 helical membrane-spanning segments follow: residues 32 to 52 (SILG…IGMG) and 78 to 98 (VAMA…IIAI).

The protein belongs to the ATPase C chain family. In terms of assembly, F-type ATPases have 2 components, F(1) - the catalytic core - and F(0) - the membrane proton channel. F(1) has five subunits: alpha(3), beta(3), gamma(1), delta(1), epsilon(1). F(0) has three main subunits: a(1), b(2) and c(10-14). The alpha and beta chains form an alternating ring which encloses part of the gamma chain. F(1) is attached to F(0) by a central stalk formed by the gamma and epsilon chains, while a peripheral stalk is formed by the delta and b chains.

Its subcellular location is the cell inner membrane. Its function is as follows. F(1)F(0) ATP synthase produces ATP from ADP in the presence of a proton or sodium gradient. F-type ATPases consist of two structural domains, F(1) containing the extramembraneous catalytic core and F(0) containing the membrane proton channel, linked together by a central stalk and a peripheral stalk. During catalysis, ATP synthesis in the catalytic domain of F(1) is coupled via a rotary mechanism of the central stalk subunits to proton translocation. Key component of the F(0) channel; it plays a direct role in translocation across the membrane. A homomeric c-ring of between 10-14 subunits forms the central stalk rotor element with the F(1) delta and epsilon subunits. The sequence is that of ATP synthase subunit c from Helicobacter pylori (strain ATCC 700392 / 26695) (Campylobacter pylori).